The sequence spans 254 residues: RING-H2 finger protein ATL28 (254 aa).

The helical transmembrane segment at 25 to 45 (VVLTGVLLFVIFAGFFSLFLW) threads the bilayer. The RING-type; atypical zinc-finger motif lies at 103–145 (CAICLSEFSDEDTVRLITVCRHPFHSNCIDLWFELHKTCPVCR).

The protein belongs to the RING-type zinc finger family. ATL subfamily.

It is found in the membrane. It catalyses the reaction S-ubiquitinyl-[E2 ubiquitin-conjugating enzyme]-L-cysteine + [acceptor protein]-L-lysine = [E2 ubiquitin-conjugating enzyme]-L-cysteine + N(6)-ubiquitinyl-[acceptor protein]-L-lysine.. It functions in the pathway protein modification; protein ubiquitination. The sequence is that of RING-H2 finger protein ATL28 (ATL28) from Arabidopsis thaliana (Mouse-ear cress).